A 308-amino-acid chain; its full sequence is Porphobilinogen deaminase (308 aa).

At Cys243 the chain carries S-(dipyrrolylmethanemethyl)cysteine.

The protein belongs to the HMBS family. In terms of assembly, monomer. Dipyrromethane serves as cofactor.

The enzyme catalyses 4 porphobilinogen + H2O = hydroxymethylbilane + 4 NH4(+). Its pathway is porphyrin-containing compound metabolism; protoporphyrin-IX biosynthesis; coproporphyrinogen-III from 5-aminolevulinate: step 2/4. Functionally, tetrapolymerization of the monopyrrole PBG into the hydroxymethylbilane pre-uroporphyrinogen in several discrete steps. The chain is Porphobilinogen deaminase from Nitrosomonas europaea (strain ATCC 19718 / CIP 103999 / KCTC 2705 / NBRC 14298).